A 383-amino-acid polypeptide reads, in one-letter code: Histidine decarboxylase (383 aa).

Histidine 120 is a binding site for substrate. Lysine 233 carries the N6-(pyridoxal phosphate)lysine modification.

Belongs to the group II decarboxylase family. In terms of assembly, homotetramer. It depends on pyridoxal 5'-phosphate as a cofactor.

It carries out the reaction L-histidine + H(+) = histamine + CO2. This chain is Histidine decarboxylase, found in Acinetobacter baumannii (strain ATCC 17978 / DSM 105126 / CIP 53.77 / LMG 1025 / NCDC KC755 / 5377).